Reading from the N-terminus, the 388-residue chain is uncharacterized protein (388 aa).

This is an uncharacterized protein from Ictaluridae (bullhead catfishes).